The chain runs to 417 residues: Spermidine/putrescine import ATP-binding protein PotA (417 aa).

One can recognise an ABC transporter domain in the interval 5–308 (IILKDLTKVF…PANRFVAQFV (304 aa)). 37-44 (GPSGCGKT) contributes to the ATP binding site. Positions 105–177 (DFNSKIKDNL…TALKCKKINK (73 aa)) are insert.

The protein belongs to the ABC transporter superfamily. Spermidine/putrescine importer (TC 3.A.1.11.1) family. The complex is composed of two ATP-binding proteins (PotA), two transmembrane proteins (PotB and PotC) and a solute-binding protein (PotD).

Its subcellular location is the cell membrane. The enzyme catalyses ATP + H2O + polyamine-[polyamine-binding protein]Side 1 = ADP + phosphate + polyamineSide 2 + [polyamine-binding protein]Side 1.. Its function is as follows. Part of the ABC transporter complex PotABCD involved in spermidine/putrescine import. Responsible for energy coupling to the transport system. The protein is Spermidine/putrescine import ATP-binding protein PotA of Aster yellows witches'-broom phytoplasma (strain AYWB).